Consider the following 200-residue polypeptide: Putative vacuolar protein sorting-associated protein 24 homolog 2 (200 aa).

The stretch at 2–23 (TIKSLLSDIEREERNVHKAIKD) forms a coiled coil.

This sequence belongs to the SNF7 family. Component of the endosomal sorting required for transport complex III (ESCRT-III), composed at least of VPS2, VPS20, VPS24 and VPS32.

Its subcellular location is the endosome. Its function is as follows. Component of the ESCRT-III complex, which is required for multivesicular bodies (MVBs) formation and sorting of endosomal cargo proteins into MVBs. The ESCRT-III complex is probably involved in the concentration of MVB cargo. In Arabidopsis thaliana (Mouse-ear cress), this protein is Putative vacuolar protein sorting-associated protein 24 homolog 2 (VPS24-2).